The following is a 749-amino-acid chain: 5-methyltetrahydropteroyltriglutamate--homocysteine methyltransferase (749 aa).

5-methyltetrahydropteroyltri-L-glutamate-binding positions include 15-18 (RELK) and K114. L-homocysteine-binding positions include 425–427 (IGS) and E478. L-methionine-binding positions include 425–427 (IGS) and E478. 5-methyltetrahydropteroyltri-L-glutamate is bound at residue W555. Residue D593 coordinates L-homocysteine. D593 provides a ligand contact to L-methionine. E599 provides a ligand contact to 5-methyltetrahydropteroyltri-L-glutamate. Zn(2+)-binding residues include H636, C638, and E660. Catalysis depends on H689, which acts as the Proton donor. C721 contacts Zn(2+).

Belongs to the vitamin-B12 independent methionine synthase family. It depends on Zn(2+) as a cofactor.

The enzyme catalyses 5-methyltetrahydropteroyltri-L-glutamate + L-homocysteine = tetrahydropteroyltri-L-glutamate + L-methionine. Its pathway is amino-acid biosynthesis; L-methionine biosynthesis via de novo pathway; L-methionine from L-homocysteine (MetE route): step 1/1. Its function is as follows. Catalyzes the transfer of a methyl group from 5-methyltetrahydrofolate to homocysteine resulting in methionine formation. The polypeptide is 5-methyltetrahydropteroyltriglutamate--homocysteine methyltransferase (Streptococcus suis (strain 05ZYH33)).